Consider the following 362-residue polypeptide: Phosphoserine aminotransferase (362 aa).

Positions 9 and 42 each coordinate L-glutamate. Pyridoxal 5'-phosphate is bound by residues 76–77 (AR), Trp102, Thr153, Asp174, and Gln197. N6-(pyridoxal phosphate)lysine is present on Lys198. Position 239 to 240 (239 to 240 (NT)) interacts with pyridoxal 5'-phosphate.

The protein belongs to the class-V pyridoxal-phosphate-dependent aminotransferase family. SerC subfamily. In terms of assembly, homodimer. Pyridoxal 5'-phosphate serves as cofactor.

The protein resides in the cytoplasm. It catalyses the reaction O-phospho-L-serine + 2-oxoglutarate = 3-phosphooxypyruvate + L-glutamate. It carries out the reaction 4-(phosphooxy)-L-threonine + 2-oxoglutarate = (R)-3-hydroxy-2-oxo-4-phosphooxybutanoate + L-glutamate. The protein operates within amino-acid biosynthesis; L-serine biosynthesis; L-serine from 3-phospho-D-glycerate: step 2/3. Its pathway is cofactor biosynthesis; pyridoxine 5'-phosphate biosynthesis; pyridoxine 5'-phosphate from D-erythrose 4-phosphate: step 3/5. In terms of biological role, catalyzes the reversible conversion of 3-phosphohydroxypyruvate to phosphoserine and of 3-hydroxy-2-oxo-4-phosphonooxybutanoate to phosphohydroxythreonine. This is Phosphoserine aminotransferase from Photorhabdus laumondii subsp. laumondii (strain DSM 15139 / CIP 105565 / TT01) (Photorhabdus luminescens subsp. laumondii).